A 466-amino-acid polypeptide reads, in one-letter code: Glutamate-1-semialdehyde 2,1-aminomutase (466 aa).

Residue Lys292 is modified to N6-(pyridoxal phosphate)lysine.

It belongs to the class-III pyridoxal-phosphate-dependent aminotransferase family. HemL subfamily. Homodimer. Requires pyridoxal 5'-phosphate as cofactor.

The protein resides in the cytoplasm. The catalysed reaction is (S)-4-amino-5-oxopentanoate = 5-aminolevulinate. It functions in the pathway porphyrin-containing compound metabolism; protoporphyrin-IX biosynthesis; 5-aminolevulinate from L-glutamyl-tRNA(Glu): step 2/2. This Tropheryma whipplei (strain TW08/27) (Whipple's bacillus) protein is Glutamate-1-semialdehyde 2,1-aminomutase.